Here is a 313-residue protein sequence, read N- to C-terminus: Serine/threonine-protein phosphatase CPPED1 (313 aa).

Ser2 carries the phosphoserine modification. The interval 47-250 (KAWATGDCDN…AVFSGHYHRN (204 aa)) is catalytic. Residues Asp53, Asp90, Asn127, and His246 each contribute to the a divalent metal cation site. Ser293 carries the post-translational modification Phosphoserine.

The protein belongs to the metallophosphoesterase superfamily. CPPED1 family. The cofactor is a divalent metal cation.

The protein localises to the cytoplasm. The enzyme catalyses O-phospho-L-seryl-[protein] + H2O = L-seryl-[protein] + phosphate. It carries out the reaction O-phospho-L-threonyl-[protein] + H2O = L-threonyl-[protein] + phosphate. Its function is as follows. Protein phosphatase that dephosphorylates AKT family kinase specifically at 'Ser-473', blocking cell cycle progression and promoting cell apoptosis. May play an inhibitory role in glucose uptake by adipocytes. The chain is Serine/threonine-protein phosphatase CPPED1 (CPPED1) from Bos taurus (Bovine).